We begin with the raw amino-acid sequence, 40 residues long: Dolichyl-diphosphooligosaccharide--protein glycosyltransferase subunit 4 (40 aa).

Topologically, residues 1–4 (MITD) are lumenal. The helical transmembrane segment at 5–25 (VQLAIFSNVLGVFLFLLVVAY) threads the bilayer. Residues 26-40 (HYINANTGKSIIKSK) lie on the Cytoplasmic side of the membrane.

It belongs to the OST4 family. As to quaternary structure, component of the oligosaccharyltransferase (OST) complex.

The protein localises to the endoplasmic reticulum membrane. Functionally, subunit of the oligosaccharyl transferase (OST) complex that catalyzes the initial transfer of a defined glycan (Glc(3)Man(9)GlcNAc(2) in eukaryotes) from the lipid carrier dolichol-pyrophosphate to an asparagine residue within an Asn-X-Ser/Thr consensus motif in nascent polypeptide chains, the first step in protein N-glycosylation. N-glycosylation occurs cotranslationally and the complex associates with the Sec61 complex at the channel-forming translocon complex that mediates protein translocation across the endoplasmic reticulum (ER). All subunits are required for a maximal enzyme activity. The chain is Dolichyl-diphosphooligosaccharide--protein glycosyltransferase subunit 4 from Drosophila grimshawi (Hawaiian fruit fly).